The sequence spans 426 residues: Glutamate-1-semialdehyde 2,1-aminomutase (426 aa).

Position 265 is an N6-(pyridoxal phosphate)lysine (Lys-265).

It belongs to the class-III pyridoxal-phosphate-dependent aminotransferase family. HemL subfamily. As to quaternary structure, homodimer. Pyridoxal 5'-phosphate serves as cofactor.

It localises to the cytoplasm. It carries out the reaction (S)-4-amino-5-oxopentanoate = 5-aminolevulinate. The protein operates within porphyrin-containing compound metabolism; protoporphyrin-IX biosynthesis; 5-aminolevulinate from L-glutamyl-tRNA(Glu): step 2/2. This is Glutamate-1-semialdehyde 2,1-aminomutase from Aliarcobacter butzleri (strain RM4018) (Arcobacter butzleri).